The primary structure comprises 120 residues: Large ribosomal subunit protein eL8 (120 aa).

The protein belongs to the eukaryotic ribosomal protein eL8 family. In terms of assembly, part of the 50S ribosomal subunit. Probably part of the RNase P complex.

The protein localises to the cytoplasm. In terms of biological role, multifunctional RNA-binding protein that recognizes the K-turn motif in ribosomal RNA, the RNA component of RNase P, box H/ACA, box C/D and box C'/D' sRNAs. This chain is Large ribosomal subunit protein eL8, found in Methanosarcina acetivorans (strain ATCC 35395 / DSM 2834 / JCM 12185 / C2A).